The sequence spans 626 residues: Beta-galactosidase large subunit (626 aa).

E466 (proton donor) is an active-site residue. The Nucleophile role is filled by E534.

The protein belongs to the glycosyl hydrolase 2 family. In terms of assembly, heterodimer of a large (LacL) and a small subunit (LacM).

The catalysed reaction is Hydrolysis of terminal non-reducing beta-D-galactose residues in beta-D-galactosides.. Its function is as follows. Component of a beta-galactosidase that displays activity with the artificial chromogenic substrate o-nitrophenyl-beta-D-galactopyranoside (ONPG). This Leuconostoc lactis protein is Beta-galactosidase large subunit.